We begin with the raw amino-acid sequence, 264 residues long: uncharacterized protein (264 aa).

The next 8 membrane-spanning stretches (helical) occupy residues 19–39 (LFPA…LPFL), 42–62 (YDWL…SGLE), 69–89 (VITL…HMGS), 100–120 (IFGV…YLCQ), 136–156 (FAVV…HFSI), 160–180 (WWLS…YEVN), 192–212 (FILI…FGAW), and 223–243 (LVHL…FLIV).

It localises to the cell membrane. This is an uncharacterized protein from Bacillus subtilis (strain 168).